The sequence spans 204 residues: UPF0637 protein USA300HOU_1046.1 (204 aa).

The protein belongs to the UPF0637 family.

The protein is UPF0637 protein USA300HOU_1046.1 of Staphylococcus aureus (strain USA300 / TCH1516).